A 198-amino-acid polypeptide reads, in one-letter code: Na(+)-translocating NADH-quinone reductase subunit E (198 aa).

The next 6 helical transmembrane spans lie at 11–31 (SIFI…FLAV), 39–59 (FGLG…NNLV), 77–97 (FLNF…LEMI), 110–130 (GIFL…SFMV), 140–160 (IVYG…LAGI), and 176–196 (LGIT…FSGV).

Belongs to the NqrDE/RnfAE family. In terms of assembly, composed of six subunits; NqrA, NqrB, NqrC, NqrD, NqrE and NqrF.

It is found in the cell inner membrane. It catalyses the reaction a ubiquinone + n Na(+)(in) + NADH + H(+) = a ubiquinol + n Na(+)(out) + NAD(+). In terms of biological role, NQR complex catalyzes the reduction of ubiquinone-1 to ubiquinol by two successive reactions, coupled with the transport of Na(+) ions from the cytoplasm to the periplasm. NqrA to NqrE are probably involved in the second step, the conversion of ubisemiquinone to ubiquinol. The chain is Na(+)-translocating NADH-quinone reductase subunit E from Photobacterium profundum (strain SS9).